Reading from the N-terminus, the 525-residue chain is Sodium-dependent lysophosphatidylcholine symporter 1 (525 aa).

Residues 1 to 29 form a disordered region; that stretch reads MEKESENASCAGLLGQKNEPGSPTQSRSG. Residues 1 to 32 lie on the Cytoplasmic side of the membrane; that stretch reads MEKESENASCAGLLGQKNEPGSPTQSRSGKHK. Residues 33 to 62 traverse the membrane as a helical segment; the sequence is LSVCSKICFAIGGAPYQITGCALGFFLQIF. The Extracellular segment spans residues 63–73; it reads LLDIAQVPPFY. The helical transmembrane segment at 74–94 threads the bilayer; that stretch reads ASIILFSGRVWDAITDPLVGF. At 95–106 the chain is on the cytoplasmic side; it reads FVSKSSWTRLGR. A helical membrane pass occupies residues 107–126; sequence LLPWVVFSTPFAVVSYLLIW. The Extracellular segment spans residues 127 to 137; the sequence is FVPGFSGVSMV. Residues 138–162 traverse the membrane as a helical segment; the sequence is IWYLVFYCLFQTLVTCFHVPYSALT. Topologically, residues 163–169 are cytoplasmic; it reads MFISKEQ. A helical membrane pass occupies residues 170–201; the sequence is SDRDSATGYRMTVEVLGTVLGTAIQGQIVGRE. The Extracellular segment spans residues 202–226; that stretch reads NTPCVEHIRETHLYNTSVIMEDLNI. Residues cysteine 205 and cysteine 458 are joined by a disulfide bond. 2 N-linked (GlcNAc...) asparagine glycosylation sites follow: asparagine 216 and asparagine 225. A helical transmembrane segment spans residues 227–260; sequence THDVESLSSTRDAYMIAAGVICAIYVLCAIILTL. Residues 261–291 are Cytoplasmic-facing; that stretch reads GVREKRDAYELLSDQPFSFWQGLKLVMSHKP. A helical transmembrane segment spans residues 292-318; the sequence is YIKLITGFLFTSLAFMLLEGNFALFLT. Topologically, residues 319-329 are extracellular; that stretch reads YTMGFRRDFQN. The helical transmembrane segment at 330-348 threads the bilayer; that stretch reads ILLVVMLSATLTVPFWQWF. Over 349-352 the chain is Cytoplasmic; that stretch reads LTRF. A helical transmembrane segment spans residues 353–374; the sequence is GKKTAVYFGISSVIPFLILVVL. Over 375–377 the chain is Extracellular; the sequence is MES. A helical transmembrane segment spans residues 378–414; it reads NLILAYVVAVAAGLSVAAAFLLPWSMLPDVIDDFILK. Topologically, residues 415-424 are cytoplasmic; it reads NPDSHGHEPI. The chain crosses the membrane as a helical span at residues 425–451; the sequence is FFSFYVFFTKFASGVSLGISTLSLDFA. Topologically, residues 452 to 463 are extracellular; that stretch reads GYQTRACSQPEQ. A helical transmembrane segment spans residues 464 to 487; that stretch reads VNLTLKMLICVAPVILILLGLLLF. Over 488–525 the chain is Cytoplasmic; sequence ILYPINEEKRKQNKKALQLIRESNRDSDSDSLELASNV.

This sequence belongs to the major facilitator superfamily.

It localises to the cell membrane. The protein localises to the endoplasmic reticulum membrane. It carries out the reaction a 1-acyl-sn-glycero-3-phosphocholine(in) + Na(+)(in) = a 1-acyl-sn-glycero-3-phosphocholine(out) + Na(+)(out). The catalysed reaction is 1-(4Z,7Z,10Z,13Z,16Z,19Z-docosahexaenoyl)-sn-glycero-3-phosphocholine(in) + Na(+)(in) = 1-(4Z,7Z,10Z,13Z,16Z,19Z-docosahexaenoyl)-sn-glycero-3-phosphocholine(out) + Na(+)(out). The enzyme catalyses 1-(9Z-octadecenoyl)-sn-glycero-3-phosphocholine(in) + Na(+)(in) = 1-(9Z-octadecenoyl)-sn-glycero-3-phosphocholine(out) + Na(+)(out). It catalyses the reaction 1-hexadecanoyl-sn-glycero-3-phosphocholine(in) + Na(+)(in) = 1-hexadecanoyl-sn-glycero-3-phosphocholine(out) + Na(+)(out). It carries out the reaction a 1-acyl-sn-glycero-3-phosphoethanolamine(in) + Na(+)(in) = a 1-acyl-sn-glycero-3-phosphoethanolamine(out) + Na(+)(out). In terms of biological role, sodium-dependent lysophosphatidylcholine (LPC) symporter, which plays an essential role for blood-brain barrier formation and function. Specifically expressed in endothelium of the blood-brain barrier of micro-vessels and transports LPC into the brain. Transport of LPC is essential because it constitutes the major mechanism by which docosahexaenoic acid (DHA), an omega-3 fatty acid that is essential for normal brain growth and cognitive function, enters the brain. Transports LPC carrying long-chain fatty acids such LPC oleate and LPC palmitate with a minimum acyl chain length of 14 carbons. Does not transport docosahexaenoic acid in unesterified fatty acid. The chain is Sodium-dependent lysophosphatidylcholine symporter 1 (mfsd2a) from Xenopus tropicalis (Western clawed frog).